We begin with the raw amino-acid sequence, 180 residues long: Ribosome maturation factor RimM (180 aa).

One can recognise a PRC barrel domain in the interval 104-177; the sequence is PEEFHDHQLV…RVVVDPPGGL (74 aa).

The protein belongs to the RimM family. Binds ribosomal protein uS19.

It is found in the cytoplasm. Its function is as follows. An accessory protein needed during the final step in the assembly of 30S ribosomal subunit, possibly for assembly of the head region. Essential for efficient processing of 16S rRNA. May be needed both before and after RbfA during the maturation of 16S rRNA. It has affinity for free ribosomal 30S subunits but not for 70S ribosomes. In Salinispora tropica (strain ATCC BAA-916 / DSM 44818 / JCM 13857 / NBRC 105044 / CNB-440), this protein is Ribosome maturation factor RimM.